Here is a 696-residue protein sequence, read N- to C-terminus: Elongation factor G (696 aa).

Residues 8–290 (ERYRNIGIMA…AVLDYLPSPL (283 aa)) enclose the tr-type G domain. GTP is bound by residues 17-24 (AHIDAGKT), 88-92 (DTPGH), and 142-145 (NKMD).

This sequence belongs to the TRAFAC class translation factor GTPase superfamily. Classic translation factor GTPase family. EF-G/EF-2 subfamily.

Its subcellular location is the cytoplasm. Catalyzes the GTP-dependent ribosomal translocation step during translation elongation. During this step, the ribosome changes from the pre-translocational (PRE) to the post-translocational (POST) state as the newly formed A-site-bound peptidyl-tRNA and P-site-bound deacylated tRNA move to the P and E sites, respectively. Catalyzes the coordinated movement of the two tRNA molecules, the mRNA and conformational changes in the ribosome. This Nitrosomonas europaea (strain ATCC 19718 / CIP 103999 / KCTC 2705 / NBRC 14298) protein is Elongation factor G.